A 448-amino-acid polypeptide reads, in one-letter code: uncharacterized protein (448 aa).

Transmembrane regions (helical) follow at residues 14-34 (PFII…YGII), 59-79 (TLLA…GFLA), 87-107 (VPML…TFGN), 120-140 (GLSA…VVGA), 148-168 (GGIF…GGIV), 171-191 (SLGY…DIAL), 250-270 (IFGP…FDAT), 288-308 (LMFG…GAMV), 316-333 (IGKR…LLCI), 338-358 (TSLN…VLAF), 392-412 (FSAY…VAGF), and 417-437 (FNFI…SLMA).

The protein belongs to the major facilitator superfamily. TCR/Tet family.

The protein resides in the endoplasmic reticulum. The protein localises to the membrane. This is an uncharacterized protein from Schizosaccharomyces pombe (strain 972 / ATCC 24843) (Fission yeast).